The sequence spans 372 residues: tRNA N6-adenosine threonylcarbamoyltransferase (372 aa).

The a divalent metal cation site is built by histidine 133, histidine 137, and tyrosine 154. Substrate-binding positions include 154-158 (YVSGG), aspartate 186, glycine 201, glutamate 205, and asparagine 301. Aspartate 330 serves as a coordination point for a divalent metal cation.

It belongs to the KAE1 / TsaD family. Component of the EKC/KEOPS complex composed of at least BUD32, CGI121, GON7, KAE1 and PCC1; the whole complex dimerizes. It depends on a divalent metal cation as a cofactor.

It localises to the cytoplasm. It is found in the nucleus. It carries out the reaction L-threonylcarbamoyladenylate + adenosine(37) in tRNA = N(6)-L-threonylcarbamoyladenosine(37) in tRNA + AMP + H(+). Component of the EKC/KEOPS complex that is required for the formation of a threonylcarbamoyl group on adenosine at position 37 (t(6)A37) in tRNAs that read codons beginning with adenine. The complex is probably involved in the transfer of the threonylcarbamoyl moiety of threonylcarbamoyl-AMP (TC-AMP) to the N6 group of A37. KAE1 likely plays a direct catalytic role in this reaction, but requires other protein(s) of the complex to fulfill this activity. The EKC/KEOPS complex also promotes both telomere uncapping and telomere elongation. The complex is required for efficient recruitment of transcriptional coactivators. The chain is tRNA N6-adenosine threonylcarbamoyltransferase from Candida albicans (strain SC5314 / ATCC MYA-2876) (Yeast).